The primary structure comprises 380 residues: Cytochrome b (380 aa).

Helical transmembrane passes span 34–54 (FGSL…LLAM), 78–99 (WLIR…YLHI), 114–134 (WNTG…GYVL), and 179–199 (FFAL…IHLT). The heme b site is built by His84 and His98. 2 residues coordinate heme b: His183 and His197. His202 is a binding site for a ubiquinone. The next 4 membrane-spanning stretches (helical) occupy residues 227-247 (LKDI…ALFS), 289-309 (LGGV…PFLH), 321-341 (LSQL…WVGS), and 348-368 (FIII…ILFP).

This sequence belongs to the cytochrome b family. As to quaternary structure, the cytochrome bc1 complex contains 11 subunits: 3 respiratory subunits (MT-CYB, CYC1 and UQCRFS1), 2 core proteins (UQCRC1 and UQCRC2) and 6 low-molecular weight proteins (UQCRH/QCR6, UQCRB/QCR7, UQCRQ/QCR8, UQCR10/QCR9, UQCR11/QCR10 and a cleavage product of UQCRFS1). This cytochrome bc1 complex then forms a dimer. The cofactor is heme b.

It is found in the mitochondrion inner membrane. In terms of biological role, component of the ubiquinol-cytochrome c reductase complex (complex III or cytochrome b-c1 complex) that is part of the mitochondrial respiratory chain. The b-c1 complex mediates electron transfer from ubiquinol to cytochrome c. Contributes to the generation of a proton gradient across the mitochondrial membrane that is then used for ATP synthesis. This Calonectris leucomelas (Streaked shearwater) protein is Cytochrome b (MT-CYB).